A 289-amino-acid polypeptide reads, in one-letter code: tRNA dimethylallyltransferase (289 aa).

9–16 (GTTASGKT) is an ATP binding site. Residue 11–16 (TASGKT) coordinates substrate. Positions 34 to 37 (DSLC) are interaction with substrate tRNA.

It belongs to the IPP transferase family. Monomer. The cofactor is Mg(2+).

It catalyses the reaction adenosine(37) in tRNA + dimethylallyl diphosphate = N(6)-dimethylallyladenosine(37) in tRNA + diphosphate. Its function is as follows. Catalyzes the transfer of a dimethylallyl group onto the adenine at position 37 in tRNAs that read codons beginning with uridine, leading to the formation of N6-(dimethylallyl)adenosine (i(6)A). This is tRNA dimethylallyltransferase from Campylobacter jejuni subsp. jejuni serotype O:23/36 (strain 81-176).